The following is a 224-amino-acid chain: Metalloproteinase inhibitor 4 (224 aa).

The signal sequence occupies residues 1–29; sequence MPWSPLAALSWALVLRLLALLWPPGRGEA. Position 30 (C30) interacts with Zn(2+). Involved in metalloproteinase-binding regions lie at residues 30-33 and 99-100; these read CSCA and SS. 6 disulfide bridges follow: C30–C102, C32–C131, C42–C156, C158–C205, C163–C168, and C176–C197. The NTR domain occupies 30-156; that stretch reads CSCAPAHPQQ…SLNHHYHQNC (127 aa).

Belongs to the protease inhibitor I35 (TIMP) family. As to expression, expressed in retina, smooth muscle, skin, pancreas, skeletal muscle, heart, brain, lung, kidney and testis. Not found in cartilage, spleen and liver.

The protein resides in the secreted. Complexes with metalloproteinases (such as collagenases) and irreversibly inactivates them by binding to their catalytic zinc cofactor. In Rattus norvegicus (Rat), this protein is Metalloproteinase inhibitor 4 (Timp4).